Here is a 279-residue protein sequence, read N- to C-terminus: MAEPMILDGNDVSKRIKDKLALQVAALEQKGVRPCLATILVGDDPASATYVRMKGNACKRLGIESKKIELPKETTTKELLAVIRELNNDSSVHGILLQHPVPSQIDERAAFDEIAIEKDVDGVTTLGFAQNAFGFAHYPSCTPAAILAILDHYQLPIEGKHAVVVGRSPILGKPVSQMLLNRNATVTICHSRTENVSDFVEKADIVVAAVGKPNFIQGEWIKSGAVVLDAGYNKGNIGDCEYDGCAQRASAITPVPGGVGPVTISMLLKHTVEAAERSV.

Residues 166–168 (GRS) and Ser-191 contribute to the NADP(+) site.

This sequence belongs to the tetrahydrofolate dehydrogenase/cyclohydrolase family. Homodimer.

The enzyme catalyses (6R)-5,10-methylene-5,6,7,8-tetrahydrofolate + NADP(+) = (6R)-5,10-methenyltetrahydrofolate + NADPH. The catalysed reaction is (6R)-5,10-methenyltetrahydrofolate + H2O = (6R)-10-formyltetrahydrofolate + H(+). It participates in one-carbon metabolism; tetrahydrofolate interconversion. Its function is as follows. Catalyzes the oxidation of 5,10-methylenetetrahydrofolate to 5,10-methenyltetrahydrofolate and then the hydrolysis of 5,10-methenyltetrahydrofolate to 10-formyltetrahydrofolate. This Shouchella clausii (strain KSM-K16) (Alkalihalobacillus clausii) protein is Bifunctional protein FolD.